A 315-amino-acid chain; its full sequence is Acetyl-coenzyme A carboxylase carboxyl transferase subunit alpha (315 aa).

Positions 39–293 (RLQDKSSTLT…RADLIEQLDM (255 aa)) constitute a CoA carboxyltransferase C-terminal domain.

It belongs to the AccA family. In terms of assembly, acetyl-CoA carboxylase is a heterohexamer composed of biotin carboxyl carrier protein (AccB), biotin carboxylase (AccC) and two subunits each of ACCase subunit alpha (AccA) and ACCase subunit beta (AccD).

It is found in the cytoplasm. It carries out the reaction N(6)-carboxybiotinyl-L-lysyl-[protein] + acetyl-CoA = N(6)-biotinyl-L-lysyl-[protein] + malonyl-CoA. It participates in lipid metabolism; malonyl-CoA biosynthesis; malonyl-CoA from acetyl-CoA: step 1/1. Component of the acetyl coenzyme A carboxylase (ACC) complex. First, biotin carboxylase catalyzes the carboxylation of biotin on its carrier protein (BCCP) and then the CO(2) group is transferred by the carboxyltransferase to acetyl-CoA to form malonyl-CoA. This Pseudomonas entomophila (strain L48) protein is Acetyl-coenzyme A carboxylase carboxyl transferase subunit alpha.